We begin with the raw amino-acid sequence, 227 residues long: Lysosomal-associated transmembrane protein 4B (227 aa).

4 helical membrane passes run 26–46, 72–92, 100–120, and 153–173; these read ILLGVWYLIINAVVLLILLSA, MCIAIAISLLMILICAMATYG, WIIPFFCYQIFDFALNTLVAI, and CLVLIILLFIGILLTLKGYLI. Residues 205–222 form a required for NEDD4 interaction region; sequence PPYDDATAVPSTAKEPPP.

Belongs to the LAPTM4/LAPTM5 transporter family. Homooligomer; upon reaching the lysosomes. Interacts with MCOLN1. Interacts with NEDD4; may play a role in the lysosomal sorting of LAPTM4B; enhances HGS association with NEDD4; mediates inhibition of EGFR degradation. Interacts with PIP5K1C; promotes SNX5 association with LAPTM4B; kinase activity of PIP5K1C is required; interaction is regulated by phosphatidylinositol 4,5-bisphosphate generated by PIP5K1C. Interacts with HGS; promotes HGS ubiquitination. Interacts with SNX5. Interacts with SLC3A2 and SLC7A5; recruits SLC3A2 and SLC7A5 to lysosomes to promote leucine uptake into these organelles and is required for mTORC1 activation. Interacts with LRRC32; decreases TGFB1 production in regulatory T cells. Interacts with BECN1; competes with EGFR for LAPTM4B binding; regulates EGFR activity. Interacts with EGFR; positively correlates with EGFR activation. Post-translationally, undergoes proteolytic cleavage following delivery to the lysosomes. Ubiquitinated by NEDD4.

The protein localises to the endomembrane system. The protein resides in the late endosome membrane. It is found in the cell membrane. It localises to the cell projection. Its subcellular location is the lysosome membrane. The protein localises to the endosome membrane. The protein resides in the endosome. It is found in the multivesicular body membrane. It localises to the multivesicular body lumen. Its function is as follows. Required for optimal lysosomal function. Blocks EGF-stimulated EGFR intraluminal sorting and degradation. Conversely by binding with the phosphatidylinositol 4,5-bisphosphate, regulates its PIP5K1C interaction, inhibits HGS ubiquitination and relieves LAPTM4B inhibition of EGFR degradation. Recruits SLC3A2 and SLC7A5 (the Leu transporter) to the lysosome, promoting entry of leucine and other essential amino acid (EAA) into the lysosome, stimulating activation of proton-transporting vacuolar (V)-ATPase protein pump (V-ATPase) and hence mTORC1 activation. Plays a role as negative regulator of TGFB1 production in regulatory T cells. Binds ceramide and facilitates its exit from late endosome in order to control cell death pathways. In Mus musculus (Mouse), this protein is Lysosomal-associated transmembrane protein 4B.